The sequence spans 1346 residues: Zinc finger protein 541 (1346 aa).

2 disordered regions span residues 1–34 (MDQY…DTLN) and 113–136 (EADE…SSPQ). The segment covering 21-32 (FSESQGLNCSDT) has biased composition (polar residues). C2H2-type zinc fingers lie at residues 140–162 (LDCS…YLTH), 168–190 (HVCK…MLTH), and 196–220 (FVCI…YEVH). Disordered regions lie at residues 235–271 (ACGD…LLPH), 283–328 (VHQK…AAPA), 437–472 (SAVP…EDAL), and 578–744 (SQLP…GGYR). Composition is skewed to low complexity over residues 294-323 (PAGA…PAGP) and 440-458 (PSRE…SPSE). A compositionally biased stretch (polar residues) spans 671–685 (PDISSLAKQLRSSKG). The segment at 838-860 (FVCKNCSQMFYTEKGLSSHMCFH) adopts a C2H2-type 4 zinc-finger fold. The interval 931–971 (AMGQEKDGEERDSKESSQQRKRKKRPPPSTAGEPGPAGCHQ) is disordered. Over residues 934–948 (QEKDGEERDSKESSQ) the composition is skewed to basic and acidic residues. The ELM2 domain occupies 1053-1145 (PHINIGSRFQ…VALETLLLRG (93 aa)). The region spanning 1160–1211 (TGSDVWTPIEKRLFKKAFYAHKKDFYLIHKMIQTKTVAQCVEYYYIWKKMIK) is the SANT domain. Residues 1224-1281 (VKREPEEVERTEEKVPCSPRERPSHHPTPKLKTKSYRRESILSSSPNAGSKRTPELLG) are disordered. A compositionally biased stretch (basic and acidic residues) spans 1234–1247 (TEEKVPCSPRERPS). Over residues 1248–1258 (HHPTPKLKTKS) the composition is skewed to basic residues. Residues 1264–1273 (ILSSSPNAGS) are compositionally biased toward polar residues. The segment at 1289 to 1311 (FPCRECERVFDKIKSRNAHMKRH) adopts a C2H2-type 5 zinc-finger fold.

As to quaternary structure, interacts with DNTTIP1. Identified in a complex with KCDT19, HDAC1 and HSPA2. Component of a histone deacetylase complex containing DNTTIP1, ZNF541, HDAC1 and HDAC2. Identified in a complex with HDAC1, HDAC2, DNTTIP1 and KCTD19.

It is found in the nucleus. In terms of biological role, transcription regulator which is essential for male fertility and for the completion of meiotic prophase in spermatocytes. Regulates progression of the pachytene stage of meiotic prophase by activating the expression of genes involved in meiosis during spermatogenesis. Maintains the repression of pre-pachytene transcriptional programs, including meiotic double-strand breaks (DSB) formation genes in pachytene spermatocytes and suppresses aberrant DSB formation after mid-pachytene, thus ensuring meiosis progression. The protein is Zinc finger protein 541 (ZNF541) of Homo sapiens (Human).